Consider the following 706-residue polypeptide: Protein kinase C theta type (706 aa).

Positions 1–107 (MSPFLRIGLS…KNNGKTEIWL (107 aa)) constitute a C2 domain. Tyr-90 carries the post-translational modification Phosphotyrosine; by LCK. Residues 159–209 (CHEFTATFFPQPTFCSVCHEFVWGLNKQGYQCRQCNAAIHKKCIDKVIAKC) form a Phorbol-ester/DAG-type 1 zinc finger. Thr-219 is modified (phosphothreonine; by autocatalysis). The Phorbol-ester/DAG-type 2 zinc finger occupies 231–281 (PHRFKVYNYKSPTFCEHCGTLLWGLARQGLKCDACGMNVHHRCQTKVANLC). Ser-348 carries the post-translational modification Phosphoserine. One can recognise a Protein kinase domain in the interval 380–634 (FILHKMLGKG…RGDIRQHPLF (255 aa)). ATP-binding positions include 386–394 (LGKGSFGKV) and Lys-409. Asp-504 (proton acceptor) is an active-site residue. Thr-538 bears the Phosphothreonine; by PDPK1 mark. An AGC-kinase C-terminal domain is found at 635-706 (REINWEELER…MNPGMERLIS (72 aa)). Ser-676, Ser-685, and Ser-695 each carry phosphoserine.

The protein belongs to the protein kinase superfamily. AGC Ser/Thr protein kinase family. PKC subfamily. As to quaternary structure, part of a lipid raft complex composed at least of BCL10, CARD11, MALT1 and IKBKB. Interacts with GLRX3 (via N-terminus). Interacts with ECT2. Interacts with CCDC88A/GIV; the interaction leads to phosphorylation of CCDC88A and inhibition of its guanine nucleotide exchange factor activity. Interacts with PRKCH upstream open reading frame 2; the interaction leads to inhibition of kinase activity. Interacts with CD28. It depends on Mg(2+) as a cofactor. Autophosphorylation at Thr-219 is required for targeting to the TCR and cellular function of PRKCQ upon antigen receptor ligation. Following TCR stimulation, phosphorylated at Tyr-90 and Ser-685. Expressed in skeletal muscle, T-cells, megakaryoblastic cells and platelets.

The protein localises to the cytoplasm. It is found in the cell membrane. The enzyme catalyses L-seryl-[protein] + ATP = O-phospho-L-seryl-[protein] + ADP + H(+). It carries out the reaction L-threonyl-[protein] + ATP = O-phospho-L-threonyl-[protein] + ADP + H(+). With respect to regulation, novel PKCs (PRKCD, PRKCE, PRKCH and PRKCQ) are calcium-insensitive, but activated by diacylglycerol (DAG) and phosphatidylserine. Three specific sites; Thr-538 (activation loop of the kinase domain), Ser-676 (turn motif) and Ser-695 (hydrophobic region), need to be phosphorylated for its full activation. Inhibited by PRKCH upstream open reading frame 2. Functionally, calcium-independent, phospholipid- and diacylglycerol (DAG)-dependent serine/threonine-protein kinase that mediates non-redundant functions in T-cell receptor (TCR) signaling, including T-cells activation, proliferation, differentiation and survival, by mediating activation of multiple transcription factors such as NF-kappa-B, JUN, NFATC1 and NFATC2. In TCR-CD3/CD28-co-stimulated T-cells, is required for the activation of NF-kappa-B and JUN, which in turn are essential for IL2 production, and participates in the calcium-dependent NFATC1 and NFATC2 transactivation. Mediates the activation of the canonical NF-kappa-B pathway (NFKB1) by direct phosphorylation of CARD11 on several serine residues, inducing CARD11 association with lipid rafts and recruitment of the BCL10-MALT1 complex, which then activates IKK complex, resulting in nuclear translocation and activation of NFKB1. May also play an indirect role in activation of the non-canonical NF-kappa-B (NFKB2) pathway. In the signaling pathway leading to JUN activation, acts by phosphorylating the mediator STK39/SPAK and may not act through MAP kinases signaling. Plays a critical role in TCR/CD28-induced NFATC1 and NFATC2 transactivation by participating in the regulation of reduced inositol 1,4,5-trisphosphate generation and intracellular calcium mobilization. After costimulation of T-cells through CD28 can phosphorylate CBLB and is required for the ubiquitination and subsequent degradation of CBLB, which is a prerequisite for the activation of TCR. During T-cells differentiation, plays an important role in the development of T-helper 2 (Th2) cells following immune and inflammatory responses, and, in the development of inflammatory autoimmune diseases, is necessary for the activation of IL17-producing Th17 cells. May play a minor role in Th1 response. Upon TCR stimulation, mediates T-cell protective survival signal by phosphorylating BAD, thus protecting T-cells from BAD-induced apoptosis, and by up-regulating BCL-X(L)/BCL2L1 levels through NF-kappa-B and JUN pathways. In platelets, regulates signal transduction downstream of the ITGA2B, CD36/GP4, F2R/PAR1 and F2RL3/PAR4 receptors, playing a positive role in 'outside-in' signaling and granule secretion signal transduction. May relay signals from the activated ITGA2B receptor by regulating the uncoupling of WASP and WIPF1, thereby permitting the regulation of actin filament nucleation and branching activity of the Arp2/3 complex. May mediate inhibitory effects of free fatty acids on insulin signaling by phosphorylating IRS1, which in turn blocks IRS1 tyrosine phosphorylation and downstream activation of the PI3K/AKT pathway. Phosphorylates MSN (moesin) in the presence of phosphatidylglycerol or phosphatidylinositol. Phosphorylates PDPK1 at 'Ser-504' and 'Ser-532' and negatively regulates its ability to phosphorylate PKB/AKT1. Phosphorylates CCDC88A/GIV and inhibits its guanine nucleotide exchange factor activity. Phosphorylates and activates LRRK1, which phosphorylates RAB proteins involved in intracellular trafficking. This Homo sapiens (Human) protein is Protein kinase C theta type (PRKCQ).